A 341-amino-acid polypeptide reads, in one-letter code: Guanine nucleotide-binding protein subunit beta (341 aa).

WD repeat units lie at residues G54–D84, L96–S126, G142–D171, G183–D213, G225–D255, N269–D299, and G311–N341.

It belongs to the WD repeat G protein beta family. In terms of assembly, g proteins are composed of 3 units, alpha, beta and gamma.

In terms of biological role, guanine nucleotide-binding proteins (G proteins) are involved as a modulator or transducer in various transmembrane signaling systems. The beta and gamma chains are required for the GTPase activity, for replacement of GDP by GTP, and for G protein-effector interaction. This is Guanine nucleotide-binding protein subunit beta from Lymnaea stagnalis (Great pond snail).